The primary structure comprises 317 residues: Methionyl-tRNA formyltransferase (317 aa).

110 to 113 contacts (6S)-5,6,7,8-tetrahydrofolate; that stretch reads SLLP.

The protein belongs to the Fmt family.

It catalyses the reaction L-methionyl-tRNA(fMet) + (6R)-10-formyltetrahydrofolate = N-formyl-L-methionyl-tRNA(fMet) + (6S)-5,6,7,8-tetrahydrofolate + H(+). Attaches a formyl group to the free amino group of methionyl-tRNA(fMet). The formyl group appears to play a dual role in the initiator identity of N-formylmethionyl-tRNA by promoting its recognition by IF2 and preventing the misappropriation of this tRNA by the elongation apparatus. The sequence is that of Methionyl-tRNA formyltransferase from Bacillus subtilis (strain 168).